The sequence spans 238 residues: MIFDTPLQGGQLIRRYKRFLADITLDSGERITAHCPNTGSMMGCAEPGSRVWVSRSDNPRRKYAYTWELVEVAAGVVVGVHTGRANALVEEALLAGRLPALRGYRRVRREVRVVNRPMRADLLLGDHSEGEPDCLLEVKNVTAAVADGVALFPDAVSARGTRHLDVLAAEARAGRRTALVFCVQRPDVREVHPADAIDRAYGQALRAALADGMEAYALQGGPSPEGIELTRELPVHCP.

The protein belongs to the SfsA family.

This chain is Sugar fermentation stimulation protein homolog, found in Alkalilimnicola ehrlichii (strain ATCC BAA-1101 / DSM 17681 / MLHE-1).